Reading from the N-terminus, the 323-residue chain is Ribose-phosphate pyrophosphokinase (323 aa).

Residues 38 to 40 (DGE) and 96 to 97 (RQ) contribute to the ATP site. Mg(2+) is bound by residues His-130 and Asp-170. Lys-193 is an active-site residue. D-ribose 5-phosphate-binding positions include Arg-195, Asp-219, and 223 to 227 (DTAGT).

It belongs to the ribose-phosphate pyrophosphokinase family. Class I subfamily. Homohexamer. Mg(2+) serves as cofactor.

The protein resides in the cytoplasm. It carries out the reaction D-ribose 5-phosphate + ATP = 5-phospho-alpha-D-ribose 1-diphosphate + AMP + H(+). Its pathway is metabolic intermediate biosynthesis; 5-phospho-alpha-D-ribose 1-diphosphate biosynthesis; 5-phospho-alpha-D-ribose 1-diphosphate from D-ribose 5-phosphate (route I): step 1/1. Its function is as follows. Involved in the biosynthesis of the central metabolite phospho-alpha-D-ribosyl-1-pyrophosphate (PRPP) via the transfer of pyrophosphoryl group from ATP to 1-hydroxyl of ribose-5-phosphate (Rib-5-P). This Chlorobaculum tepidum (strain ATCC 49652 / DSM 12025 / NBRC 103806 / TLS) (Chlorobium tepidum) protein is Ribose-phosphate pyrophosphokinase.